The sequence spans 379 residues: UPF0754 membrane protein ABC1518 (379 aa).

2 helical membrane passes run 1-21 (MHWI…GAAT) and 358-378 (LLGG…VHFF).

This sequence belongs to the UPF0754 family.

Its subcellular location is the cell membrane. This chain is UPF0754 membrane protein ABC1518, found in Shouchella clausii (strain KSM-K16) (Alkalihalobacillus clausii).